The chain runs to 476 residues: Probable serine carboxypeptidase CPVL (476 aa).

Residues 1–22 (MVGTMWKVIVSLVLLMPGSCDG) form the signal peptide. Asn81 and Asn132 each carry an N-linked (GlcNAc...) asparagine glycan. Residue Ser204 is part of the active site. N-linked (GlcNAc...) asparagine glycosylation is found at Asn307 and Asn346. Catalysis depends on residues Asp388 and His448.

Belongs to the peptidase S10 family.

In terms of biological role, may be involved in the digestion of phagocytosed particles in the lysosome, participation in an inflammatory protease cascade, and trimming of peptides for antigen presentation. In Pongo abelii (Sumatran orangutan), this protein is Probable serine carboxypeptidase CPVL (CPVL).